The sequence spans 206 residues: Small ribosomal subunit protein uS4 (206 aa).

Positions 98–161 (RRLDNVVYRL…RSMELIKNNL (64 aa)) constitute an S4 RNA-binding domain.

This sequence belongs to the universal ribosomal protein uS4 family. As to quaternary structure, part of the 30S ribosomal subunit. Contacts protein S5. The interaction surface between S4 and S5 is involved in control of translational fidelity.

One of the primary rRNA binding proteins, it binds directly to 16S rRNA where it nucleates assembly of the body of the 30S subunit. Functionally, with S5 and S12 plays an important role in translational accuracy. The protein is Small ribosomal subunit protein uS4 of Caldanaerobacter subterraneus subsp. tengcongensis (strain DSM 15242 / JCM 11007 / NBRC 100824 / MB4) (Thermoanaerobacter tengcongensis).